Here is a 147-residue protein sequence, read N- to C-terminus: Large ribosomal subunit protein uL15 (147 aa).

Residues 1-59 (MKLYELKPAPGSKKNRKRVGRGESSGHGKTSTRGHKGQWARSGGGVRPGFEGGQMPLTR) are disordered. The span at 42 to 52 (SGGGVRPGFEG) shows a compositional bias: gly residues.

This sequence belongs to the universal ribosomal protein uL15 family. Part of the 50S ribosomal subunit.

In terms of biological role, binds to the 23S rRNA. In Caldicellulosiruptor bescii (strain ATCC BAA-1888 / DSM 6725 / KCTC 15123 / Z-1320) (Anaerocellum thermophilum), this protein is Large ribosomal subunit protein uL15.